The chain runs to 613 residues: MPDYRSKTSTQGRNMAGARALWRATGMKDEDFKKPIIAIANSFTQFVPGHVHLKDLGQLVAREIERAGGVAKEFNTIAVDDGIAMGHDGMLYSLPSREIIADAVEYMVNAHCADAIVCISNCDKITPGMLMAALRLNIPVIFVSGGPMEAGKTKLASHGLDLVDAMVIAADSTASDEKVAEYERSACPTCGSCSGMFTANSMNCLTEALGLALPGNGSTLATHSDREQLFLTAGRTIVELCKRYYGENDESVLPRSIANFKAFENAMMLDIAMGGSTNTILHLLAAAQEGEVAFDLRDIDRLSRKVPQLCKVAPNIQKYHMEDVHRAGGIFSILGSLARGGLLHTDLPTVHSRSMEEAIAKWDITQTDDEAVHTFFKAGPAGIPTQTAFSQSTRWETLDDDRENGCIRSFEHAYSQEGGLAVLYGNIALDGCVVKTAGVDESIHVFEGTAKIFESQDSAVRGILADEVKAGDIVIIRYEGPKGGPGMQEMLYPTSYLKSKGLGKACALLTDGRFSGGTSGLSIGHASPEAAAGGAIGLVRDGDKVLIDIPNRSINLLVSDEELAQRRVEQDKKGWKPAEVRPRKVTTALKAYALLATSADKGAVRNKAMLEGL.

D81 contributes to the Mg(2+) binding site. Residue C122 participates in [2Fe-2S] cluster binding. Residues D123 and K124 each contribute to the Mg(2+) site. At K124 the chain carries N6-carboxylysine. C193 contributes to the [2Fe-2S] cluster binding site. E489 serves as a coordination point for Mg(2+). The Proton acceptor role is filled by S515.

Belongs to the IlvD/Edd family. As to quaternary structure, homodimer. Requires [2Fe-2S] cluster as cofactor. The cofactor is Mg(2+).

The catalysed reaction is (2R)-2,3-dihydroxy-3-methylbutanoate = 3-methyl-2-oxobutanoate + H2O. It catalyses the reaction (2R,3R)-2,3-dihydroxy-3-methylpentanoate = (S)-3-methyl-2-oxopentanoate + H2O. The protein operates within amino-acid biosynthesis; L-isoleucine biosynthesis; L-isoleucine from 2-oxobutanoate: step 3/4. It participates in amino-acid biosynthesis; L-valine biosynthesis; L-valine from pyruvate: step 3/4. Its function is as follows. Functions in the biosynthesis of branched-chain amino acids. Catalyzes the dehydration of (2R,3R)-2,3-dihydroxy-3-methylpentanoate (2,3-dihydroxy-3-methylvalerate) into 2-oxo-3-methylpentanoate (2-oxo-3-methylvalerate) and of (2R)-2,3-dihydroxy-3-methylbutanoate (2,3-dihydroxyisovalerate) into 2-oxo-3-methylbutanoate (2-oxoisovalerate), the penultimate precursor to L-isoleucine and L-valine, respectively. The chain is Dihydroxy-acid dehydratase from Pseudomonas putida (strain ATCC 47054 / DSM 6125 / CFBP 8728 / NCIMB 11950 / KT2440).